The sequence spans 609 residues: Hemagglutinin glycoprotein (609 aa).

Residues 1-34 (MSPPRDRVDAYYKDNFQFKNTRVVLNKEQLLIER) lie on the Intravirion side of the membrane. A helical; Signal-anchor for type II membrane protein transmembrane segment spans residues 35-58 (PCMLLTVLFVMFLSLVGLLAIAGI). At 59–609 (RLHRAAVNTA…VGIKITCNGK (551 aa)) the chain is on the virion surface side. 5 N-linked (GlcNAc...) asparagine; by host glycosylation sites follow: Asn-168, Asn-187, Asn-200, Asn-215, and Asn-395.

It belongs to the paramyxoviruses hemagglutinin-neuraminidase family. Non-sialidase subfamily.

The protein resides in the virion membrane. It localises to the host membrane. Functionally, attaches the virus to cell receptors and thereby initiating infection. Binding of H protein to the receptor induces a conformational change that allows the F protein to trigger virion/cell membranes fusion. Down-regulates human MCP/CD46 cell surface expression. The polypeptide is Hemagglutinin glycoprotein (H) (Rinderpest virus (strain Kabete O) (RDV)).